A 67-amino-acid chain; its full sequence is MPKMKTKSSAKKRFKITATGKVKAAAAGKRHGMIKRTNKFIRDARGTMVLAEPDGRKVIKNYLPNGL.

Belongs to the bacterial ribosomal protein bL35 family.

In Rhizobium etli (strain CIAT 652), this protein is Large ribosomal subunit protein bL35.